A 227-amino-acid chain; its full sequence is MINRYFITGTDTNIGKTISVCALLQYLNKLGNKSVGCKLISSGCKKIKNKIFNEDVVNIMKYNNIKFKYKDINPFAFLEKTAPHIASKRKNIFINHILLSNKLNKFLNYDIDYLIIEGFGGWKVPINSNSMYSEWVSNEKLPIILVVGIKLGCINHALLTIESIKNSNAIILGWIANHLEKDLINKNDYFKYLKKVIKYPLIGKIPFIKNKKNFSNLHKYIFLKKVI.

13-18 lines the ATP pocket; sequence NIGKTI. T17 contacts Mg(2+). Residue K38 is part of the active site. A substrate-binding site is contributed by S42. Residues D55, 117–120, 177–178, 206–208, and N213 each bind ATP; these read EGFG, NH, and PFI. Residues D55 and E117 each contribute to the Mg(2+) site.

This sequence belongs to the dethiobiotin synthetase family. As to quaternary structure, homodimer. It depends on Mg(2+) as a cofactor.

The protein resides in the cytoplasm. It catalyses the reaction (7R,8S)-7,8-diammoniononanoate + CO2 + ATP = (4R,5S)-dethiobiotin + ADP + phosphate + 3 H(+). The protein operates within cofactor biosynthesis; biotin biosynthesis; biotin from 7,8-diaminononanoate: step 1/2. In terms of biological role, catalyzes a mechanistically unusual reaction, the ATP-dependent insertion of CO2 between the N7 and N8 nitrogen atoms of 7,8-diaminopelargonic acid (DAPA, also called 7,8-diammoniononanoate) to form a ureido ring. The protein is ATP-dependent dethiobiotin synthetase BioD of Wigglesworthia glossinidia brevipalpis.